We begin with the raw amino-acid sequence, 299 residues long: Taste receptor type 2 member 1 (299 aa).

Topologically, residues 1–9 (MLESHLIIY) are extracellular. The chain crosses the membrane as a helical span at residues 10–30 (FLLAVIQFLLGIFTNGIIVVV). Residues 31 to 55 (NGIDLIKHRKMAPLDLLLSCLAVSR) are Cytoplasmic-facing. A helical transmembrane segment spans residues 56–76 (IFLQLFIFYVNVIVIFFIEFI). At 77 to 81 (MCSAN) the chain is on the extracellular side. The helical transmembrane segment at 82–102 (CAILLFINELELWLATWLGVF) threads the bilayer. Topologically, residues 103-124 (YCAKVASVRHPLFXWLKMRISK) are cytoplasmic. A helical transmembrane segment spans residues 125-145 (LVPWMILGSLLYVSMICVFHS). At 146–178 (KYAGFMVPYFLRNFFSQNTTIQKEDTLAIQIFS) the chain is on the extracellular side. N163 carries N-linked (GlcNAc...) asparagine glycosylation. A helical membrane pass occupies residues 179 to 199 (FVAEFSVPLLIFLVAVLLLIF). At 200-222 (SLGRHTRQMRNTVAGSRVPGRGA) the chain is on the cytoplasmic side. The helical transmembrane segment at 223 to 243 (PISALLSILSFLILYFSHCMI) threads the bilayer. Topologically, residues 244 to 257 (KVFLSSLKFHIRRF) are extracellular. The chain crosses the membrane as a helical span at residues 258-278 (IFLFFILVIGIYPSGHSLILI). At 279–299 (LGNPKLKQNAKKFLLHSKCCQ) the chain is on the cytoplasmic side.

Belongs to the G-protein coupled receptor T2R family.

The protein resides in the membrane. In terms of biological role, receptor that may play a role in the perception of bitterness and is gustducin-linked. May play a role in sensing the chemical composition of the gastrointestinal content. The activity of this receptor may stimulate alpha gustducin, mediate PLC-beta-2 activation and lead to the gating of TRPM5. This is Taste receptor type 2 member 1 (TAS2R1) from Gorilla gorilla gorilla (Western lowland gorilla).